Here is a 349-residue protein sequence, read N- to C-terminus: Fe(3+) ions import ATP-binding protein FbpC (349 aa).

One can recognise an ABC transporter domain in the interval 4-236 (LELHHIGKSY…PVDEPTATFL (233 aa)). 36–43 (GPSGSGKT) contributes to the ATP binding site.

Belongs to the ABC transporter superfamily. Fe(3+) ion importer (TC 3.A.1.10) family. In terms of assembly, the complex is composed of two ATP-binding proteins (FbpC), two transmembrane proteins (FbpB) and a solute-binding protein (FbpA).

The protein localises to the cell inner membrane. It catalyses the reaction Fe(3+)(out) + ATP + H2O = Fe(3+)(in) + ADP + phosphate + H(+). In terms of biological role, part of the ABC transporter complex FbpABC involved in Fe(3+) ions import. Responsible for energy coupling to the transport system. The chain is Fe(3+) ions import ATP-binding protein FbpC from Yersinia pseudotuberculosis serotype I (strain IP32953).